Consider the following 245-residue polypeptide: NAD-dependent protein deacylase (245 aa).

Residues 1-245 (MEAVWESARI…RLSRAMGIDI (245 aa)) form the Deacetylase sirtuin-type domain. 22-41 (GAGISAESGIPTFRGKDGLW) lines the NAD(+) pocket. Residues Tyr66 and Arg69 each contribute to the substrate site. 100-103 (QNVD) is an NAD(+) binding site. His118 functions as the Proton acceptor in the catalytic mechanism. Zn(2+) contacts are provided by Cys126, Cys129, Cys146, and Cys149. NAD(+)-binding positions include 186–188 (GTS), 212–214 (NPE), and Met241.

Belongs to the sirtuin family. Class III subfamily. The cofactor is Zn(2+).

The protein localises to the cytoplasm. It carries out the reaction N(6)-acetyl-L-lysyl-[protein] + NAD(+) + H2O = 2''-O-acetyl-ADP-D-ribose + nicotinamide + L-lysyl-[protein]. The catalysed reaction is N(6)-succinyl-L-lysyl-[protein] + NAD(+) + H2O = 2''-O-succinyl-ADP-D-ribose + nicotinamide + L-lysyl-[protein]. Functionally, NAD-dependent lysine deacetylase and desuccinylase that specifically removes acetyl and succinyl groups on target proteins. Modulates the activities of several proteins which are inactive in their acylated form. Deacetylates the N-terminal lysine residue of Alba, the major archaeal chromatin protein and that, in turn, increases Alba's DNA binding affinity, thereby repressing transcription. This chain is NAD-dependent protein deacylase, found in Aeropyrum pernix (strain ATCC 700893 / DSM 11879 / JCM 9820 / NBRC 100138 / K1).